The primary structure comprises 174 residues: Phytochrome-interacting ankyrin-repeat protein 2 (174 aa).

The segment covering 1–13 has biased composition (low complexity); it reads MLQEPSAAFSLRR. The disordered stretch occupies residues 1–29; sequence MLQEPSAAFSLRRNSFRRRSPRSNVDDRG. S15 is modified (phosphoserine). ANK repeat units follow at residues 28–57, 65–94, and 100–129; these read RGWN…DVNA, KGVS…NIDA, and CGWT…FLAD.

As to quaternary structure, interacts with phytochrome A (PHYA), both in Pr and Pfr forms. Binds to PIF3, a repressor of photomorphogenesis in response to phytochrome-mediated light signaling; this interaction may trigger the repression of PHYA-mediated PIF3 phosphorylation. Interacts with SIGE/SIG5 in mitochondrion. Interacts with RPS9M (via C terminus). Post-translationally, phosphorylated by PHYA. As to expression, mostly expressed in flowers, cotyledons, leaves and siliques, and, to a lower extent, in roots and stems. Also detected at low levels in seedlings grown in continuous dark or light conditions. Expressed in male and female gametophytes.

The protein resides in the cytoplasm. The protein localises to the nucleus. It localises to the mitochondrion. In terms of biological role, promotes anthocyanin accumulation through interaction with PHYA, especially in response to far-red light, high light and sucrose treatment, probably by triggering A3G2XYLT/UF3GT expression. Required for gametophytes development as well as male-female gamete recognition during fertilization, possibly by regulating mitochondrial gene expression. Represses PHYA-mediated PIF3 phosphorylation. This chain is Phytochrome-interacting ankyrin-repeat protein 2, found in Arabidopsis thaliana (Mouse-ear cress).